Reading from the N-terminus, the 152-residue chain is MRVLVQRVAHASVVVAGETIGKISRGLLLLVGVTHTDSQNDLEWMAKKILKLRIFEDDEGKMNRSVEDVGGAILAVSQFTLYGDARKGNRPSFLEAARPEQAQASYQDFVKMLKLLGSVPVETGQFAAHMEVSLLNDGPVTLMLESPTKEEK.

A Gly-cisPro motif, important for rejection of L-amino acids motif is present at residues 138–139; the sequence is GP.

Belongs to the DTD family. Homodimer.

The protein localises to the cytoplasm. The enzyme catalyses glycyl-tRNA(Ala) + H2O = tRNA(Ala) + glycine + H(+). It carries out the reaction a D-aminoacyl-tRNA + H2O = a tRNA + a D-alpha-amino acid + H(+). Its function is as follows. An aminoacyl-tRNA editing enzyme that deacylates mischarged D-aminoacyl-tRNAs. Also deacylates mischarged glycyl-tRNA(Ala), protecting cells against glycine mischarging by AlaRS. Acts via tRNA-based rather than protein-based catalysis; rejects L-amino acids rather than detecting D-amino acids in the active site. By recycling D-aminoacyl-tRNA to D-amino acids and free tRNA molecules, this enzyme counteracts the toxicity associated with the formation of D-aminoacyl-tRNA entities in vivo and helps enforce protein L-homochirality. The sequence is that of D-aminoacyl-tRNA deacylase from Chloroherpeton thalassium (strain ATCC 35110 / GB-78).